Here is a 143-residue protein sequence, read N- to C-terminus: Large ribosomal subunit protein uL11 (143 aa).

The protein belongs to the universal ribosomal protein uL11 family. In terms of assembly, part of the ribosomal stalk of the 50S ribosomal subunit. Interacts with L10 and the large rRNA to form the base of the stalk. L10 forms an elongated spine to which L12 dimers bind in a sequential fashion forming a multimeric L10(L12)X complex. Post-translationally, one or more lysine residues are methylated.

Functionally, forms part of the ribosomal stalk which helps the ribosome interact with GTP-bound translation factors. The protein is Large ribosomal subunit protein uL11 of Bifidobacterium adolescentis (strain ATCC 15703 / DSM 20083 / NCTC 11814 / E194a).